The sequence spans 463 residues: Chromogranin-A (463 aa).

Residues M1–A18 form the signal peptide. C35 and C56 are joined by a disulfide. A disordered region spans residues K88–L440. Low complexity predominate over residues Q92–Q116. S119 carries the phosphoserine modification. The segment covering D134–Q160 has biased composition (basic and acidic residues). A compositionally biased stretch (polar residues) spans T196 to S208. Phosphoserine occurs at positions 220, 282, and 308. Residues G301–Q310 are compositionally biased toward basic and acidic residues. G329 bears the Glycine amide mark. 2 stretches are compositionally biased toward basic and acidic residues: residues K331–E340 and R348–E375. Phosphoserine occurs at positions 350 and 383. M384 carries the post-translational modification Methionine sulfoxide. Over residues S409–D437 the composition is skewed to basic and acidic residues. Phosphoserine is present on residues S410, S414, and S430. Residue S430 is glycosylated (O-linked (Xyl...) (chondroitin sulfate) serine). Q438 carries the post-translational modification Pyrrolidone carboxylic acid. Phosphoserine is present on S444.

It belongs to the chromogranin/secretogranin protein family. In terms of assembly, self-interacts; self-assembly is promoted in vitro by chondroitin sulfate attachment which occurs at mildly acidic pH conditions. Interacts with SCG3; this interaction is optimal in conditions mimicking the lumenal milieu of the trans-Golgi network, i.e. pH 5.5 and 10 mM Ca(+2). Interacts with ITPR1 in the secretory granules. In terms of processing, O-glycosylated; contains chondroitin sulfate (CS). CS attachment is pH-dependent, being observed at mildly acidic conditions of pH 5 but not at neutral pH, and promotes self-assembly in vitro.

It localises to the cytoplasmic vesicle. The protein resides in the secretory vesicle. The protein localises to the neuronal dense core vesicle. It is found in the secreted. Strongly inhibits glucose induced insulin release from the pancreas. In terms of biological role, inhibits catecholamine release from chromaffin cells and noradrenergic neurons by acting as a non-competitive nicotinic cholinergic antagonist. Can induce mast cell migration, degranulation and production of cytokines and chemokines. Functionally, regulates granule biogenesis in endocrine cells by up-regulating the transcription of protease nexin 1 (SERPINE2) via a cAMP-PKA-SP1 pathway. This leads to inhibition of granule protein degradation in the Golgi complex which in turn promotes granule formation. Pyroglutaminated (pGlu)-serpinin exerts an antiapoptotic effect on cells exposed to oxidative stress. The sequence is that of Chromogranin-A (Chga) from Mus musculus (Mouse).